A 134-amino-acid chain; its full sequence is RuBisCO chaperone RbcX (134 aa).

A disordered region spans residues 97-134 (SNGNHRRSLLERLTQVDSSSTDQTEPNPGESDTSEDSE). The span at 111-122 (QVDSSSTDQTEP) shows a compositional bias: polar residues.

Belongs to the RbcX family. In terms of assembly, homodimer (RbcX2). Interacts with the exposed C-terminal peptide of RbcL ('Glu-459-Asp-468'); binds 2 RbcL peptides per RbcX2, stapling them into an RbcL2 dimer. A slightly longer peptide binds with a higher affinity, but no long-term stable interaction with RbcL is detected. Contacts a second RbcL monomer via its peripheral polar surface.

Its subcellular location is the carboxysome. The protein resides in the cytoplasm. Functionally, an RbcL-specific chaperone. Required for assembly of the RbcL8 core, acting downstream of the major chaperonin (GroEL-GroES). Acts on newly folded RbcL, has a transient dynamic interaction with RbcL and is eventually displaced by RbcS. The central cleft of the RbcX homodimer (RbcX2) binds the C-terminus of an RbcL monomer, stabilizing the C-terminus and probably preventing its reassociation with chaperonin GroEL-ES. At the same time the peripheral region of RbcX2 binds a second RbcL monomer, bridging the RbcL homodimers in the correct orientation. The RbcX2(2)-bound RbcL dimers then assemble into the RbcL8 core (RbcL8-(RbcX2)8). RbcS binding triggers the release of RbcX2. Required for optimal reconstitution of RuBisCO into its RbcL8S8 holoenzyme form upon expression of rbcL-rbcS subunits in E.coli, and probably also in situ. A frameshift mutation that replaces half the protein reduces accumulation of both RbcL and RbcS subunits and halves activity of RuBisCO in situ and in E.coli. This is RuBisCO chaperone RbcX from Picosynechococcus sp. (strain ATCC 27264 / PCC 7002 / PR-6) (Agmenellum quadruplicatum).